Consider the following 245-residue polypeptide: MAPK-interacting and spindle-stabilizing protein-like (245 aa).

The segment at 1 to 245 (MSDEFSLADA…PMPGGPHSYH (245 aa)) is disordered. Serine 2 is subject to N-acetylserine. Phosphoserine is present on residues serine 2, serine 6, and serine 15. Over residues 17–26 (AKTSAVSNTK) the composition is skewed to polar residues. Residues 34 to 51 (WPGSNPWNNPSAPSSVPS) show a composition bias toward low complexity. Pro residues-rich tracts occupy residues 74-127 (SVPP…PELP), 164-190 (PNMPYPSPGPYPAPPPPQAPGAAPPVP), and 198-207 (AWGPPAPYPA).

The protein belongs to the MISS family.

This Homo sapiens (Human) protein is MAPK-interacting and spindle-stabilizing protein-like (MAPK1IP1L).